The following is a 601-amino-acid chain: Serine/threonine-protein phosphatase 2A 65 kDa regulatory subunit A beta isoform (601 aa).

At Ala2 the chain carries N-acetylalanine. HEAT repeat units follow at residues 20-58, 59-96, 97-135, 136-173, 174-212, 213-251, 252-290, 291-333, 334-372, 373-411, 412-450, 451-489, 490-528, 529-567, and 568-601; these read DSLYPIAVLIDELRNEDVQLRLNSIKKLSTIALALGVER, TRTELLPFLTDTIYDEDEVLLALAEQLGNFTGLVGGPD, FAHCLLPPLESLATVEETVVRDKAVESLRQISQEHTPVA, LEAHFVPLVKRLASGDWFTSRTSACGLFSVCYPRASNA, VKAEIRQHFRSLCSDDTPMVRRAAASKLGEFAKVLELDS, VKTEIVPLFTNLASDEQDSVRLLAVEACVSIAQLLSQDD, LEALVMPTLRQAAEDKSWRVRYMVADKFSELQKAVGPKI, ALSD…RETV, IMNQILPYIKELVSDTNQHVKSALASVIMGLSTVLGKEN, TIEHLLPLFLAQLKDECPEVRLNIISNLDCVNEVIGIRQ, LSQSLLPAIVELAEDAKWRVRLAIIEYMPLLAGQLGVEF, FDEKLNSLCMAWLVDHVYAIREAATNNLMKLVQKFGTEW, AQNTIVPKVLVMANDPNYLHRMTTLFCINALSEACGKEI, TTKQMLPIVLKMAGDQVANVRFNVAKSLQKIGPILDTNA, and LQGEVKPVLQKLGQDEDMDVKYFAQEAISVLALA.

This sequence belongs to the phosphatase 2A regulatory subunit A family. PP2A consists of a common heterodimeric core enzyme, composed of a 36 kDa catalytic subunit (subunit C) and a 65 kDa constant regulatory subunit (PR65 or subunit A), that associates with a variety of regulatory subunits. Proteins that associate with the core dimer include three families of regulatory subunits B (the R2/B/PR55/B55, R3/B''/PR72/PR130/PR59 and R5/B'/B56 families), the 48 kDa variable regulatory subunit, viral proteins, and cell signaling molecules. Interacts with IPO9. Interacts with SGO1. Interacts with RAF1.

Its function is as follows. The PR65 subunit of protein phosphatase 2A serves as a scaffolding molecule to coordinate the assembly of the catalytic subunit and a variable regulatory B subunit. This chain is Serine/threonine-protein phosphatase 2A 65 kDa regulatory subunit A beta isoform (Ppp2r1b), found in Rattus norvegicus (Rat).